The following is a 438-amino-acid chain: Glutaryl-CoA dehydrogenase, mitochondrial (438 aa).

The transit peptide at 1–44 (MALRGVYAQLLNRGPGLRVFRSWSSATAQTEKGEKTQSRSAKPS) directs the protein to the mitochondrion. Substrate-binding positions include 138–139 (RS) and Ser-186. FAD contacts are provided by residues 177–186 (FGLTEPNHGS), Ser-186, and 212–214 (WIT). The residue at position 240 (Lys-240) is an N6-acetyllysine. 287–294 (FGCLNNAR) serves as a coordination point for substrate. FAD contacts are provided by residues Arg-319, Gln-330, and 387-391 (DMLGG). Glu-414 functions as the Proton acceptor in the catalytic mechanism. Gly-415 contacts substrate. Residues Thr-416, 416 to 418 (THD), and Phe-434 contribute to the FAD site.

It belongs to the acyl-CoA dehydrogenase family. Homotetramer. It depends on FAD as a cofactor.

It is found in the mitochondrion matrix. The enzyme catalyses glutaryl-CoA + oxidized [electron-transfer flavoprotein] + 2 H(+) = (2E)-butenoyl-CoA + reduced [electron-transfer flavoprotein] + CO2. Its pathway is amino-acid metabolism; lysine degradation. It functions in the pathway amino-acid metabolism; tryptophan metabolism. Functionally, catalyzes the oxidative decarboxylation of glutaryl-CoA to crotonyl-CoA and CO(2) in the degradative pathway of L-lysine, L-hydroxylysine, and L-tryptophan metabolism. It uses electron transfer flavoprotein as its electron acceptor. The sequence is that of Glutaryl-CoA dehydrogenase, mitochondrial (GCDH) from Bos taurus (Bovine).